Here is a 215-residue protein sequence, read N- to C-terminus: UPF0502 protein YceH (215 aa).

Residue lysine 80 is modified to N6-acetyllysine.

This sequence belongs to the UPF0502 family.

The polypeptide is UPF0502 protein YceH (Shigella flexneri serotype 5b (strain 8401)).